Here is a 294-residue protein sequence, read N- to C-terminus: tRNA dimethylallyltransferase (294 aa).

ATP is bound at residue 7–14; that stretch reads GPTGSGKS. 9–14 contributes to the substrate binding site; that stretch reads TGSGKS.

This sequence belongs to the IPP transferase family. Monomer. Mg(2+) serves as cofactor.

It catalyses the reaction adenosine(37) in tRNA + dimethylallyl diphosphate = N(6)-dimethylallyladenosine(37) in tRNA + diphosphate. Functionally, catalyzes the transfer of a dimethylallyl group onto the adenine at position 37 in tRNAs that read codons beginning with uridine, leading to the formation of N6-(dimethylallyl)adenosine (i(6)A). The chain is tRNA dimethylallyltransferase from Akkermansia muciniphila (strain ATCC BAA-835 / DSM 22959 / JCM 33894 / BCRC 81048 / CCUG 64013 / CIP 107961 / Muc).